Reading from the N-terminus, the 917-residue chain is ABC transporter A family member 12 (917 aa).

A run of 6 helical transmembrane segments spans residues 34–54 (LILV…VLDA), 323–343 (IASL…FPVI), 377–397 (FLTI…AIGL), 409–429 (FVFY…VSSI), 435–455 (TVTV…SFLF), and 508–528 (GEVF…AYYI). Residues 595-832 (ILCDNLKKVY…YGGSYVFTMT (238 aa)) enclose the ABC transporter domain. 633–640 (GPNGAGKT) provides a ligand contact to ATP.

Belongs to the ABC transporter superfamily. ABCA family. CPR flippase (TC 3.A.1.211) subfamily.

The protein localises to the membrane. The chain is ABC transporter A family member 12 (ABCA12) from Arabidopsis thaliana (Mouse-ear cress).